Consider the following 64-residue polypeptide: UPF0337 protein SAR0874 (64 aa).

The interval 1–40 is disordered; it reads MADESKFEQAKGNVKETVGNVTDNKNLENEGKEDKASGKA. Basic and acidic residues predominate over residues 25–40; it reads KNLENEGKEDKASGKA.

It belongs to the UPF0337 (CsbD) family.

In Staphylococcus aureus (strain MRSA252), this protein is UPF0337 protein SAR0874.